Consider the following 288-residue polypeptide: Probable chromosome 1-partitioning protein ParB (288 aa).

The protein belongs to the ParB family.

Functionally, involved in chromosome partition. Localize to both poles of the predivisional cell following completion of DNA replication. Binds to the DNA origin of replication. The chain is Probable chromosome 1-partitioning protein ParB (parB1) from Deinococcus radiodurans (strain ATCC 13939 / DSM 20539 / JCM 16871 / CCUG 27074 / LMG 4051 / NBRC 15346 / NCIMB 9279 / VKM B-1422 / R1).